We begin with the raw amino-acid sequence, 2506 residues long: MEVLQCDGCDFRAPSYEDLKAHIQDVHTAFLQPTDVAEDNVNELRCGSVNASNQTEVEFSSIKDEFAIAEDLSGQNATSLGTGGYYGHSPGYYGQHIAANPKPTNKFFQCKFCVRYFRSKNLLIEHTRKVHGAQAEGSSSGPPVPGSLNYNIMMHEGFGKVFSCQFCTYKSPRRARIIKHQKMYHKNNLKETTAPPPAPAPMPDPVVPPVSLQDPCKELPAEVVERSILESMVKPLTKSRGNFCCEWCSYQTPRRERWCDHMMKKHRSMVKILSSLRQQQEGTNLPDVPNKSAPSPTSNSTYLTMNAASREIPNTTVSNFRGSMGNSIMRPNSSASKFSPMSYPQMKPKSPHNSGLVNLTERSRYGMTDMTNSSADLETNSMLNDSSSDEELNEIDSENGLSAMDHQTSGLSAEQLMGSDGNKLLETKGIPFRRFMNRFQCPFCPFLTMHRRSISRHIENIHLSGKTAVYKCDECPFTCKSSLKLGAHKQCHTGTTSDWDAVNSQSESISSSLNEGVVSYESSSINGRKSGVMLDPLQQQQPPQPPPPPPPPPPSQPQPLQQPQPPQLQPPHQVPPQPQTQPPPTQQPQPPTQAAPLHPYKCTMCNYSTTTLKGLRVHQQHKHSFCDNLPKFEGQPSSLPLENETDSHPSSSNTVKKSQTSILGLSSKNNFVAKASRKLANDFPLDLSPVKKRTRIDEIASNLQSKINQTKQQEDAVINVEDDEEEEEDNEVEIEVELDREEEPTEPIIEVPTSFSAQQIWVRDTSEPQKEPNFRNITHDYNATNGAEIELTLSEDEEDYYGSSTNLKDHQVSNTALLNTQTPIYGTEHNSENTDFGDSGRLYYCKHCDFNNKSARSVSTHYQRMHPYIKFSFRYILDPNDHSAVYRCLECYIDYTNFEDLQQHYGEHHPEAMNVLNFDHSDLIYRCRFCSYTSPNVRSLMPHYQRMHPTVKINNAMIFSSYVVEQQEGLNTESQTLREILNSAPKNMATSTPVARGGGLPATFNKNTPKTFTPECENQKDPLVNTVVVYDCDVCSFASPNMHSVLVHYQKKHPEEKASYFRIQKTMRMVSVDRGSALSQLSFEVGAPMSPKMSNMGSPPPPQPPPPDLSTELYYCKHCSYSNRSVVGVLVHYQKRHPEIKVTAKYIRQAPPTAAMMRGVEGPQGSPRPPAPIQQLNRSSSERDGPPVENEMFFCQHCDYGNRTVKGVLIHYQKKHRDFKANADVIRQHTATIRSLCDRNQKKPASCVLVSPSNLERDKTKLRALKCRQCSYTSPYFYALRKHIKKDHPALKATVTSIMRWAFLDGLIEAGYHCEWCIYSHTEPNGLLLHYQRRHPEHYVDYTYMATKLWAGPDPSPPSLTMPAEAKTYRCRDCVFEAVSIWDITNHYQAFHPWAMNGDESVLLDIIKEKDAVEKPILSSEELAGPVNCENSIPTPFPEQEAECPEDARLSPEKSLQLASANPAISSTPYQCTVCQSEYNNLHGLLTHYGKKHPGMKVKAADFAQDIDINPGAVYKCRHCPYINTRIHGVLTHYQKRHPSIKVTAEDFVHDVEQSADISQNDVEETSRIFKQGYGAYRCKLCPYTHGTLEKLKIHYEKYHNQPEFDVFSQSPPKLPVPLEPEMTTEVSPSQVSITEEEVGEEPVSTSHFSTSHLVSHTVFRCQLCKYFCSTRKGIARHYRIKHNNVRAQPEGKNNLFKCALCAYTNPIRKGLAAHYQKRHDIDAYYTHCLAASRTISDKPNKVIIPSPPKDDSPQLSEELRRAVEKKKCSLCSFQSFSKKGIVSHYMKRHPGVFPKKQHASKLGGYFTAVYADEHEKPTLMEEEERGNFEKAEVEGEAQEIEWLPFRCIKCFKLSFSTAELLCMHYTDHHSRDLKRDFIILGNGPRLQNSTYQCKHCDSKLQSTAELTSHLNIHNEEFQKRAKRQERRKQLLSKQKYADGAFADFKQERPFGHLEEVPKIKERKVVGYKCKFCVEVHPTLRAICNHLRKHVQYGNVPAVSAAVKGLRSHERSHLALAMFTREDKYSCQYCSFVSAFRHNLDRHMQTHHGHHKPFRCKLCSFKSSYNSRLKTHILKAHAGEHAYKCSWCSFSTMTISQLKEHSLKVHGKALTLPRPRIVSLLSSHSHHSSQKATPAEEVEDSNDSSYSEPPDVQQQLNHYQSAALARNNSRVSPVPLSGAAAGTEQKTEAVLHCEFCEFSSGYIQSIRRHYRDKHGGKKLFKCKDCSFYTGFKSAFTMHVEAGHSAVPEEGPKDLRCPLCLYHTKYKRNMIDHIVLHREERVVPIEVCRSKLSKYLQGVVFRCDKCTFTCSSDESLQQHIEKHNELKPYKCQLCYYETKHTEELDSHLRDEHKVSRNFELVGRVNLDQLEQMKEKMESSSSDDEDKEEEMNSKAEDRELMRFSDHGAALNTEKRFPCEFCGRAFSQGSEWERHVLRHGMALNDTKQVSREEIHPKEIMENSVKMPSIEEKEDDEAIGIDFSLKNETVAICVVTADKSLLENAEAKKE.

C2H2-type zinc fingers lie at residues 4-27 (LQCD…QDVH), 108-131 (FQCK…RKVH), and 162-185 (FSCQ…KMYH). A Glycyl lysine isopeptide (Lys-Gly) (interchain with G-Cter in SUMO1); alternate cross-link involves residue K20. A Glycyl lysine isopeptide (Lys-Gly) (interchain with G-Cter in SUMO2); alternate cross-link involves residue K20. An interaction with PBX1 region spans residues 215–241 (PCKELPAEVVERSILESMVKPLTKSRG). Residues K234 and K271 each participate in a glycyl lysine isopeptide (Lys-Gly) (interchain with G-Cter in SUMO2) cross-link. The tract at residues 280–299 (QEGTNLPDVPNKSAPSPTSN) is disordered. S292 and S309 each carry an O-linked (GlcNAc6P) serine glycan. Residues K337, K347, and K349 each participate in a glycyl lysine isopeptide (Lys-Gly) (interchain with G-Cter in SUMO2) cross-link. Residues 337–356 (KFSPMSYPQMKPKSPHNSGL) form a disordered region. S350 and S354 each carry phosphoserine. K428 participates in a covalent cross-link: Glycyl lysine isopeptide (Lys-Gly) (interchain with G-Cter in SUMO2). 2 C2H2-type zinc fingers span residues 439 to 462 (FQCP…ENIH) and 470 to 492 (YKCD…KQCH). K484 is covalently cross-linked (Glycyl lysine isopeptide (Lys-Gly) (interchain with G-Cter in SUMO2)). The tract at residues 535-596 (DPLQQQQPPQ…QPQPPTQAAP (62 aa)) is disordered. Positions 542–593 (PPQPPPPPPPPPPSQPQPLQQPQPPQLQPPHQVPPQPQTQPPPTQQPQPPTQ) are enriched in pro residues. Residues 600–623 (YKCTMCNYSTTTLKGLRVHQQHKH) form a C2H2-type 6 zinc finger. Residues K631, K657, and K668 each participate in a glycyl lysine isopeptide (Lys-Gly) (interchain with G-Cter in SUMO2) cross-link. A disordered region spans residues 636 to 661 (PSSLPLENETDSHPSSSNTVKKSQTS). Residues 648 to 661 (HPSSSNTVKKSQTS) are compositionally biased toward polar residues. S688 bears the Phosphoserine mark. Residues K706 and D849 each participate in a glycyl lysine isopeptide (Lys-Gly) (interchain with G-Cter in SUMO2) cross-link. 3 consecutive C2H2-type zinc fingers follow at residues 843-866 (YYCK…QRMH), 886-908 (YRCL…YGEH), and 925-948 (YRCR…QRMH). K986 participates in a covalent cross-link: Glycyl lysine isopeptide (Lys-Gly) (interchain with G-Cter in SUMO2). The segment at 1030–1053 (YDCDVCSFASPNMHSVLVHYQKKH) adopts a C2H2-type 10 zinc-finger fold. Residue S1090 is modified to Phosphoserine. Residue K1135 forms a Glycyl lysine isopeptide (Lys-Gly) (interchain with G-Cter in SUMO2) linkage. Residues 1157–1186 (MRGVEGPQGSPRPPAPIQQLNRSSSERDGP) are disordered. Position 1166 is a phosphoserine (S1166). Residues K1206, K1214, K1220, and K1243 each participate in a glycyl lysine isopeptide (Lys-Gly) (interchain with G-Cter in SUMO2) cross-link. 2 C2H2-type zinc fingers span residues 1265 to 1288 (LKCR…KKDH) and 1470 to 1493 (YQCT…GKKH). Residue K1499 forms a Glycyl lysine isopeptide (Lys-Gly) (interchain with G-Cter in SUMO2) linkage. Residues 1515 to 1538 (YKCRHCPYINTRIHGVLTHYQKRH) form a C2H2-type 13 zinc finger. Residues K1571 and K1591 each participate in a glycyl lysine isopeptide (Lys-Gly) (interchain with G-Cter in SUMO2) cross-link. 3 C2H2-type zinc fingers span residues 1577-1600 (YRCK…EKYH), 1660-1683 (FRCQ…RIKH), and 1697-1720 (FKCA…QKRH). Residues K1698 and K1780 each participate in a glycyl lysine isopeptide (Lys-Gly) (interchain with G-Cter in SUMO2) cross-link. The C2H2-type 17 zinc-finger motif lies at 1892-1914 (YQCKHCDSKLQSTAELTSHLNIH). A Glycyl lysine isopeptide (Lys-Gly) (interchain with G-Cter in SUMO2) cross-link involves residue K1946. Residues 1968 to 1992 (YKCKFCVEVHPTLRAICNHLRKHVQ) form a C2H2-type 18; degenerate zinc finger. An N6-methyllysine modification is found at K2004. 3 C2H2-type zinc fingers span residues 2025–2048 (YSCQ…QTHH), 2054–2077 (FRCK…LKAH), and 2083–2106 (YKCS…LKVH). Residue K2104 forms a Glycyl lysine isopeptide (Lys-Gly) (interchain with G-Cter in SUMO2) linkage. The interval 2122-2152 (SSHSHHSSQKATPAEEVEDSNDSSYSEPPDV) is disordered. Residues 2143-2152 (DSSYSEPPDV) show a composition bias toward polar residues. Phosphoserine occurs at positions 2172 and 2177. 3 consecutive C2H2-type zinc fingers follow at residues 2191–2214 (LHCE…RDKH), 2220–2243 (FKCK…EAGH), and 2254–2276 (LRCP…IVLH). K2293 is covalently cross-linked (Glycyl lysine isopeptide (Lys-Gly) (interchain with G-Cter in SUMO2)). C2H2-type zinc fingers lie at residues 2300 to 2322 (FRCD…IEKH) and 2328 to 2351 (YKCQ…RDEH). A disordered region spans residues 2371–2396 (MKEKMESSSSDDEDKEEEMNSKAEDR). Residues 2414-2436 (FPCEFCGRAFSQGSEWERHVLRH) form a C2H2-type 27 zinc finger. Residues K2444 and K2504 each participate in a glycyl lysine isopeptide (Lys-Gly) (interchain with G-Cter in SUMO2) cross-link.

As to quaternary structure, interacts with PBX1; this interaction prevents PBX1-HOXA9 heterodimer from forming and binding to DNA. Post-translationally, O-GlcNAcylated with O-GlcNAc-6-phosphate.

The protein resides in the nucleus. Zinc finger nuclear factor involved in transcription by regulating chromatin structure and organization. Involved in the pluripotency and differentiation of embryonic stem cells by regulating SOX2, POU5F1/OCT4, and NANOG. By binding PBX1, prevents the heterodimerization of PBX1 and HOXA9 and their binding to DNA. Regulates neuronal development and neural cell differentiation. This Homo sapiens (Human) protein is Zinc finger protein 462.